The chain runs to 225 residues: Biosynthetic peptidoglycan transglycosylase (225 aa).

A helical membrane pass occupies residues 9–29 (LLIFIGAILLIQLWIFSSLVW).

The protein belongs to the glycosyltransferase 51 family.

The protein resides in the cell inner membrane. The catalysed reaction is [GlcNAc-(1-&gt;4)-Mur2Ac(oyl-L-Ala-gamma-D-Glu-L-Lys-D-Ala-D-Ala)](n)-di-trans,octa-cis-undecaprenyl diphosphate + beta-D-GlcNAc-(1-&gt;4)-Mur2Ac(oyl-L-Ala-gamma-D-Glu-L-Lys-D-Ala-D-Ala)-di-trans,octa-cis-undecaprenyl diphosphate = [GlcNAc-(1-&gt;4)-Mur2Ac(oyl-L-Ala-gamma-D-Glu-L-Lys-D-Ala-D-Ala)](n+1)-di-trans,octa-cis-undecaprenyl diphosphate + di-trans,octa-cis-undecaprenyl diphosphate + H(+). It functions in the pathway cell wall biogenesis; peptidoglycan biosynthesis. Peptidoglycan polymerase that catalyzes glycan chain elongation from lipid-linked precursors. The protein is Biosynthetic peptidoglycan transglycosylase of Acinetobacter baumannii (strain SDF).